We begin with the raw amino-acid sequence, 643 residues long: uncharacterized protein (643 aa).

A helical transmembrane segment spans residues 9-29 (IVLALLLLLLPVVCGDVSVYK).

Its subcellular location is the membrane. This is an uncharacterized protein from Methanocaldococcus jannaschii (strain ATCC 43067 / DSM 2661 / JAL-1 / JCM 10045 / NBRC 100440) (Methanococcus jannaschii).